Here is a 1040-residue protein sequence, read N- to C-terminus: DIS3-like exonuclease 1 (1040 aa).

Residues 232-310 enclose the CSD1 domain; it reads AGIKSGRYKQ…KGRTGALCEN (79 aa). A CSD2 domain is found at 360 to 426; the sequence is VLVMPWDYRI…AEIATILVEN (67 aa). Residues 459 to 808 form the RNB domain; sequence RLDLRETHLV…VHRLLLAAVN (350 aa).

The protein belongs to the RNR ribonuclease family. Component of the RNA exosome complex. The cofactor is Mg(2+).

Its subcellular location is the cytoplasm. It carries out the reaction Exonucleolytic cleavage in the 3'- to 5'-direction to yield nucleoside 5'-phosphates.. In terms of biological role, catalytic component of the RNA exosome complex which has 3'-&gt;5' exoribonuclease activity and participates in a multitude of cellular RNA processing and degradation events. The polypeptide is DIS3-like exonuclease 1 (dis3l) (Xenopus laevis (African clawed frog)).